The following is a 358-amino-acid chain: Putative movement protein (358 aa).

In terms of biological role, transports viral genome to neighboring plant cells directly through plasmosdesmata, without any budding. The movement protein allows efficient cell to cell propagation, by bypassing the host cell wall barrier (Potential). This Raspberry bushy dwarf virus (isolate Malling Jewel raspberry/R15) (RBDV) protein is Putative movement protein.